We begin with the raw amino-acid sequence, 468 residues long: Probable soluble pyridine nucleotide transhydrogenase (468 aa).

33 to 42 is an FAD binding site; the sequence is ERGRMLGGVC.

Belongs to the class-I pyridine nucleotide-disulfide oxidoreductase family. FAD serves as cofactor.

The protein localises to the cytoplasm. It carries out the reaction NAD(+) + NADPH = NADH + NADP(+). Conversion of NADPH, generated by peripheral catabolic pathways, to NADH, which can enter the respiratory chain for energy generation. The polypeptide is Probable soluble pyridine nucleotide transhydrogenase (sthA) (Mycobacterium bovis (strain ATCC BAA-935 / AF2122/97)).